Reading from the N-terminus, the 79-residue chain is Small ribosomal subunit protein uS17 (79 aa).

This sequence belongs to the universal ribosomal protein uS17 family. In terms of assembly, part of the 30S ribosomal subunit.

Functionally, one of the primary rRNA binding proteins, it binds specifically to the 5'-end of 16S ribosomal RNA. The protein is Small ribosomal subunit protein uS17 of Rhizobium etli (strain ATCC 51251 / DSM 11541 / JCM 21823 / NBRC 15573 / CFN 42).